The following is a 446-amino-acid chain: Divalent metal cation transporter MntH (446 aa).

Transmembrane regions (helical) follow at residues 32 to 52 (FSFLGPGLLVAVGYMDPGNWI), 59 to 79 (AQFGYILLFVILLSSLSAMLL), 107 to 127 (AFVFWIIAELAIIATDIAEVI), 139 to 159 (IPLLVGALITVFDVFLLLFIM), 168 to 188 (AIVGTLIFTVLVIFVFEVFIA), 210 to 230 (GALFIALGIIGATIMPHNLYL), 264 to 284 (SIAFIVNCLLLVLGAALFFGV), 303 to 323 (PLLGASLGAIMSTLFAIALLA), 355 to 375 (LITRLIAILPIIICLIVFNSN), 381 to 401 (QLLVFSQVFLSLALPFSLIPL), and 420 to 440 (VNIISWCLIIILSILNIYLII).

It belongs to the NRAMP family.

It localises to the cell membrane. Its function is as follows. H(+)-stimulated, divalent metal cation uptake system. This is Divalent metal cation transporter MntH from Staphylococcus saprophyticus subsp. saprophyticus (strain ATCC 15305 / DSM 20229 / NCIMB 8711 / NCTC 7292 / S-41).